The following is a 101-amino-acid chain: UPF0235 protein CJA_0091 (101 aa).

This sequence belongs to the UPF0235 family.

This chain is UPF0235 protein CJA_0091, found in Cellvibrio japonicus (strain Ueda107) (Pseudomonas fluorescens subsp. cellulosa).